A 152-amino-acid chain; its full sequence is Small ribosomal subunit protein uS19x (152 aa).

Belongs to the universal ribosomal protein uS19 family.

It localises to the cytoplasm. This is Small ribosomal subunit protein uS19x (RPS15D) from Arabidopsis thaliana (Mouse-ear cress).